Here is a 353-residue protein sequence, read N- to C-terminus: Uroporphyrinogen decarboxylase (353 aa).

Substrate-binding positions include 25–29, Asp-74, Tyr-151, Ser-206, and His-325; that span reads RQAGR.

This sequence belongs to the uroporphyrinogen decarboxylase family. In terms of assembly, homodimer.

The protein localises to the cytoplasm. It carries out the reaction uroporphyrinogen III + 4 H(+) = coproporphyrinogen III + 4 CO2. The protein operates within porphyrin-containing compound metabolism; protoporphyrin-IX biosynthesis; coproporphyrinogen-III from 5-aminolevulinate: step 4/4. Its function is as follows. Catalyzes the decarboxylation of four acetate groups of uroporphyrinogen-III to yield coproporphyrinogen-III. This chain is Uroporphyrinogen decarboxylase, found in Chloroherpeton thalassium (strain ATCC 35110 / GB-78).